Here is a 102-residue protein sequence, read N- to C-terminus: Acid shock protein (102 aa).

A signal peptide spans methionine 1 to alanine 21. The span at alanine 22 to lysine 41 shows a compositional bias: low complexity. Positions alanine 22–glutamine 58 are excised as a propeptide. The interval alanine 22–alanine 102 is disordered. The span at alanine 80–histidine 90 shows a compositional bias: basic residues. The span at glutamine 91–alanine 102 shows a compositional bias: low complexity.

The protein belongs to the Asr family. In terms of processing, proteolytic processing gives rise to the active protein.

The protein resides in the periplasm. Functionally, required for growth and/or survival at acidic conditions. The sequence is that of Acid shock protein from Escherichia coli (strain SE11).